Consider the following 282-residue polypeptide: Phosphoglucan phosphatase LSF2, chloroplastic (282 aa).

The N-terminal 61 residues, 1–61 (MSVIGSKSCI…GENPGTNGVS (61 aa)), are a transit peptide targeting the chloroplast. Residues Y83, 153-156 (RHMR), D161, and 177-180 (SLEW) each bind substrate. One can recognise a Tyrosine-protein phosphatase domain in the interval 92 to 249 (NYTLIRDELI…TYDLAKNDPW (158 aa)). Catalysis depends on C193, which acts as the Phosphocysteine intermediate. The Glucan phosphatase signature motif CXAGXGR signature appears at 193 to 199 (CSAGLGR). Substrate is bound by residues 194–199 (SAGLGR), G230, K245, E251, 259–263 (NAFED), and E268.

As to expression, widely expressed.

Its subcellular location is the plastid. It localises to the chloroplast. In terms of biological role, starch-associated phosphoglucan phosphatase that selectively dephosphorylates the glucan C3 position. Probably participates in the regulation of starch degradation. The polypeptide is Phosphoglucan phosphatase LSF2, chloroplastic (LSF2) (Arabidopsis thaliana (Mouse-ear cress)).